A 178-amino-acid polypeptide reads, in one-letter code: ATP synthase subunit delta (178 aa).

It belongs to the ATPase delta chain family. F-type ATPases have 2 components, F(1) - the catalytic core - and F(0) - the membrane proton channel. F(1) has five subunits: alpha(3), beta(3), gamma(1), delta(1), epsilon(1). F(0) has three main subunits: a(1), b(2) and c(10-14). The alpha and beta chains form an alternating ring which encloses part of the gamma chain. F(1) is attached to F(0) by a central stalk formed by the gamma and epsilon chains, while a peripheral stalk is formed by the delta and b chains.

Its subcellular location is the cell inner membrane. F(1)F(0) ATP synthase produces ATP from ADP in the presence of a proton or sodium gradient. F-type ATPases consist of two structural domains, F(1) containing the extramembraneous catalytic core and F(0) containing the membrane proton channel, linked together by a central stalk and a peripheral stalk. During catalysis, ATP synthesis in the catalytic domain of F(1) is coupled via a rotary mechanism of the central stalk subunits to proton translocation. Functionally, this protein is part of the stalk that links CF(0) to CF(1). It either transmits conformational changes from CF(0) to CF(1) or is implicated in proton conduction. The polypeptide is ATP synthase subunit delta (Acinetobacter baumannii (strain AB307-0294)).